The primary structure comprises 258 residues: Imidazole glycerol phosphate synthase subunit HisF (258 aa).

Catalysis depends on residues aspartate 11 and aspartate 130.

Belongs to the HisA/HisF family. Heterodimer of HisH and HisF.

The protein resides in the cytoplasm. It carries out the reaction 5-[(5-phospho-1-deoxy-D-ribulos-1-ylimino)methylamino]-1-(5-phospho-beta-D-ribosyl)imidazole-4-carboxamide + L-glutamine = D-erythro-1-(imidazol-4-yl)glycerol 3-phosphate + 5-amino-1-(5-phospho-beta-D-ribosyl)imidazole-4-carboxamide + L-glutamate + H(+). The protein operates within amino-acid biosynthesis; L-histidine biosynthesis; L-histidine from 5-phospho-alpha-D-ribose 1-diphosphate: step 5/9. In terms of biological role, IGPS catalyzes the conversion of PRFAR and glutamine to IGP, AICAR and glutamate. The HisF subunit catalyzes the cyclization activity that produces IGP and AICAR from PRFAR using the ammonia provided by the HisH subunit. The chain is Imidazole glycerol phosphate synthase subunit HisF from Salmonella agona (strain SL483).